Reading from the N-terminus, the 310-residue chain is Ribosomal RNA small subunit methyltransferase H (310 aa).

S-adenosyl-L-methionine-binding positions include 35–37 (GGH), aspartate 52, phenylalanine 79, aspartate 100, and glutamine 107.

The protein belongs to the methyltransferase superfamily. RsmH family.

The protein localises to the cytoplasm. The enzyme catalyses cytidine(1402) in 16S rRNA + S-adenosyl-L-methionine = N(4)-methylcytidine(1402) in 16S rRNA + S-adenosyl-L-homocysteine + H(+). Functionally, specifically methylates the N4 position of cytidine in position 1402 (C1402) of 16S rRNA. The sequence is that of Ribosomal RNA small subunit methyltransferase H from Anaeromyxobacter sp. (strain K).